The sequence spans 354 residues: Chorismate synthase (354 aa).

Residue Arg46 participates in NADP(+) binding. FMN contacts are provided by residues 123 to 125 (RVS), 233 to 234 (NG), Gly273, 288 to 292 (KPTPS), and Arg314.

It belongs to the chorismate synthase family. Homotetramer. Requires FMNH2 as cofactor.

The catalysed reaction is 5-O-(1-carboxyvinyl)-3-phosphoshikimate = chorismate + phosphate. It functions in the pathway metabolic intermediate biosynthesis; chorismate biosynthesis; chorismate from D-erythrose 4-phosphate and phosphoenolpyruvate: step 7/7. Catalyzes the anti-1,4-elimination of the C-3 phosphate and the C-6 proR hydrogen from 5-enolpyruvylshikimate-3-phosphate (EPSP) to yield chorismate, which is the branch point compound that serves as the starting substrate for the three terminal pathways of aromatic amino acid biosynthesis. This reaction introduces a second double bond into the aromatic ring system. In Campylobacter curvus (strain 525.92), this protein is Chorismate synthase.